A 610-amino-acid chain; its full sequence is MKVPSPSVREAASMYGTAVAIFLVILVAALQGSEPPESPFPYRIPLDPEGTLELSWNVSYVQETIHFQLLVRELKAGVLFGMSDRGELENADLVVLWTDGDSAYFGDAWSDQKGWIHLDAQQDYQLLRAQRTPEGLSLLFKRPFGTCDPKDYLIEDGTVHLVYGILEEPFWSLEAINTSALHTGLQRVQLLKPNVSVPALPADMRTMEVRAPDVLVPGQETTYWCYITELPDGFPRHHIVMYEPIVTEGNEALVHHMEVFQCAAEFESFPQFNGPCDSKMKPSRLNYCRNVLAAWALGAKAFYYPEEAGLAFGGAGSSRFLRLEVHYHNPLKIEGRRDSSGIRLYYTATLRRFDAGIMELGLVYTPVMAIPPQETAFVLTGYCTDKCTQLALPPSGIHIFASQLHTHLTGRKVVTVLARDGREREVVNRDDHYSPHFQEIRMLKKVVSVHPGDVLITSCTYNTEDRKLATVGGFGILEEMCVNYVHYYPQTQLELCKSAVDPGFLQKYFHFVNRFNGEEVCTCPQASVPEQFATVPWNSFNRQVLSALYGFAPISMHCNRSSAVRFQGDWNLQPLPEIISKLEEPTPRCPASRGRSPAGPTVVDIGGGKG.

At 1 to 9 (MKVPSPSVR) the chain is on the cytoplasmic side. The chain crosses the membrane as a helical; Signal-anchor for type II membrane protein span at residues 10–30 (EAASMYGTAVAIFLVILVAAL). At 31–610 (QGSEPPESPF…TVVDIGGGKG (580 aa)) the chain is on the intragranular side. In terms of domain architecture, DOMON spans 50–166 (GTLELSWNVS…GTVHLVYGIL (117 aa)). N-linked (GlcNAc...) asparagine glycosylation is found at Asn57, Asn177, and Asn194. Intrachain disulfides connect Cys147–Cys589, Cys225–Cys276, Cys262–Cys288, Cys383–Cys496, Cys387–Cys558, and Cys459–Cys481. Residue Tyr223 is part of the active site. Positions 255 and 256 each coordinate Cu(2+). The Cu(2+) site is built by His326, His405, His407, and Met480. His405 is a catalytic residue. The tract at residues 586-610 (TPRCPASRGRSPAGPTVVDIGGGKG) is disordered.

It belongs to the copper type II ascorbate-dependent monooxygenase family. In terms of assembly, homotetramer; composed of two disulfide-linked dimers. Requires Cu(2+) as cofactor. Proteolytic cleavage after the membrane-anchor leads to the release of the soluble form. In terms of processing, N-glycosylated. In terms of tissue distribution, detected in adrenal medulla chromaffin cells.

It localises to the cytoplasmic vesicle. Its subcellular location is the secretory vesicle lumen. It is found in the secretory vesicle. The protein localises to the chromaffin granule lumen. The protein resides in the secreted. It localises to the secretory vesicle membrane. Its subcellular location is the chromaffin granule membrane. The enzyme catalyses dopamine + 2 L-ascorbate + O2 = (R)-noradrenaline + 2 monodehydro-L-ascorbate radical + H2O. It participates in catecholamine biosynthesis; (R)-noradrenaline biosynthesis; (R)-noradrenaline from dopamine: step 1/1. Functionally, catalyzes the hydroxylation of dopamine to noradrenaline (also known as norepinephrine), and is thus vital for regulation of these neurotransmitters. The sequence is that of Dopamine beta-hydroxylase (DBH) from Equus caballus (Horse).